The sequence spans 263 residues: Lens fiber major intrinsic protein (263 aa).

Residues 1 to 9 (MWELRSASF) lie on the Cytoplasmic side of the membrane. Residues 10 to 29 (WRAIFAEFFATLFYVFFGLG) traverse the membrane as a helical segment. Over 30-41 (ASLRWAPGPLHV) the chain is Extracellular. A helical transmembrane segment spans residues 42 to 59 (LQVALAFGLALATLVQAV). At 60-61 (GH) the chain is on the cytoplasmic side. An intramembrane region (discontinuously helical) is located at residues 62 to 77 (ISGAHVNPAVTFAFLV). An NPA 1 motif is present at residues 68–70 (NPA). Residues 78–82 (GSQMS) are Cytoplasmic-facing. Residues 83-106 (LLRAICYMAAQLLGAVAGAAVLYS) form a helical membrane-spanning segment. At 107 to 127 (VTPAAVRGNLALNTLHPGVSL) the chain is on the extracellular side. Residues 128 to 148 (GQATTVEIFLTLQFVLCIFAT) traverse the membrane as a helical segment. Topologically, residues 149 to 156 (YDERRNGR) are cytoplasmic. Residues 157–175 (LGSVALAVGFSLTLGHLFG) form a helical membrane-spanning segment. The Extracellular segment spans residues 176–178 (MYY). An intramembrane region (discontinuously helical) is located at residues 179–193 (TGAGMNPARSFAPAI). The NPA 2 motif lies at 184-186 (NPA). Topologically, residues 194–200 (LTRNFTN) are extracellular. Residues 201–222 (HWVYWVGPIIGGGLASLLYDFL) traverse the membrane as a helical segment. Residues 223–263 (LFPRLKSVSERLSILKGARPSDSNGQPEGTGEPVELKTQAL) are Cytoplasmic-facing. Positions 227 to 237 (LKSVSERLSIL) are interaction with CALM. Ser235, Ser243, and Ser245 each carry phosphoserine. The disordered stretch occupies residues 240-263 (ARPSDSNGQPEGTGEPVELKTQAL). At Asn246 the chain carries Deamidated asparagine.

Belongs to the MIP/aquaporin (TC 1.A.8) family. As to quaternary structure, homotetramer; each monomer provides an independent water pore. Two homotetramers on opposing membranes can dimerize, forming a cell-cell junction. Interacts with CALM; the calcium-calmodulin/CALM complex interacts with the cytoplasmic domains of two aquaporins, leading to channel closure. Interacts with BFSP1 (via C-terminus); prevents calcium-dependent inhibition of the water channel activity. In terms of processing, subject to partial proteolytic cleavage in the eye lens core. Partial proteolysis promotes interactions between tetramers from adjoining membranes. Fatty acylated at Met-1 and Lys-238. The acyl modifications, in decreasing order of ion abundance, are: oleoyl (C18:1) &gt; palmitoyl (C16:0) &gt; stearoyl (C18:0) &gt; eicosenoyl (C20:1) &gt; dihomo-gamma-linolenoyl (C20:3) &gt; palmitoleoyl (C16:1) &gt; eicosadienoyl (C20:2).

The protein resides in the cell membrane. It is found in the cell junction. The catalysed reaction is H2O(in) = H2O(out). Its activity is regulated as follows. The water channel activity is inhibited by calcium through calmodulin/CALM. Its function is as follows. Aquaporins form homotetrameric transmembrane channels, with each monomer independently mediating water transport across the plasma membrane along its osmotic gradient. Specifically expressed in lens fiber cells, this aquaporin is crucial for maintaining lens water homeostasis and transparency. Beyond water permeability, it also acts as a cell-to-cell adhesion molecule, forming thin junctions between lens fiber cells that are essential for maintaining the ordered structure and transparency of the lens. This chain is Lens fiber major intrinsic protein, found in Oryctolagus cuniculus (Rabbit).